We begin with the raw amino-acid sequence, 391 residues long: Phosphoprotein (391 aa).

The tract at residues 1–194 is N-terminus domain; the sequence is MDQFIKQDET…GSLSGATLYA (194 aa). Phosphothreonine occurs at positions 10, 16, 91, 150, and 165. A Phosphoserine modification is found at Ser-188. Residues 216 to 279 form a multimerization region; that stretch reads ISANEIMDLL…MATVKIMDPG (64 aa). Positions 218–245 form a coiled coil; that stretch reads ANEIMDLLRGMDARLQHLEQKVDKVLAQ. A Phosphothreonine modification is found at Thr-250. Ser-257 carries the post-translational modification Phosphoserine. Thr-258 and Thr-282 each carry phosphothreonine. Residues Ser-292 and Ser-294 each carry the phosphoserine modification. Phosphothreonine is present on Thr-298. Phosphoserine is present on residues Ser-301 and Ser-374. Residues 343–391 are interaction with the nucleoprotein; sequence AGQKVMITKMITDCVANPQMKQAFEQRLAKASTEDALNDIKRDIIRSAI. Thr-375 bears the Phosphothreonine mark.

It belongs to the rubulavirus/avulavirus P protein family. In terms of assembly, homotetramer. Interacts (via multimerization domain) with polymerase L; this interaction forms the polymerase L-P complex. Interacts (via N-terminus) with N0 (via Ncore); this interaction allows P to chaperon N0 to avoid N polymerization before encapsidation. Interacts (via C-terminus) with N-RNA template; this interaction positions the polymerase on the template for both transcription and replication. Interacts with host RPS6KB1 kinase; this interaction may play a role in the viral replication and transcription.

Its subcellular location is the virion. In terms of biological role, essential cofactor of the RNA polymerase L that plays a central role in the transcription and replication by forming the polymerase complex with RNA polymerase L and recruiting L to the genomic N-RNA template for RNA synthesis. Also plays a central role in the encapsidation of nascent RNA chains by forming the encapsidation complex with the nucleocapsid protein N (N-P complex). Acts as a chaperone for newly synthesized free N protein, so-called N0, allowing encapsidation of nascent RNA chains during replication. The nucleoprotein protein N prevents excessive phosphorylation of P, which leads to down-regulation of viral transcription/ replication. Participates, together with N, in the formation of viral factories (viroplasms), which are large inclusions in the host cytoplasm where replication takes place. The polypeptide is Phosphoprotein (Homo sapiens (Human)).